A 94-amino-acid polypeptide reads, in one-letter code: Non-specific lipid-transfer protein 1 (94 aa).

Cystine bridges form between C4/C53, C14/C30, C31/C76, and C51/C90.

Plant non-specific lipid-transfer proteins transfer phospholipids as well as galactolipids across membranes. May play a role in wax or cutin deposition in the cell walls of expanding epidermal cells and certain secretory tissues. The protein is Non-specific lipid-transfer protein 1 of Amaranthus hypochondriacus (Prince-of-Wales feather).